The following is a 438-amino-acid chain: Putative hydrolase MSMEG_3995/MSMEI_3903 (438 aa).

Positions 95, 104, 143, and 208 each coordinate Zn(2+). Residue lysine 217 forms an Isoglutamyl lysine isopeptide (Lys-Gln) (interchain with Q-Cter in protein Pup) linkage. Histidine 400 contributes to the Zn(2+) binding site.

Belongs to the peptidase M20 family. Zn(2+) serves as cofactor.

The chain is Putative hydrolase MSMEG_3995/MSMEI_3903 from Mycolicibacterium smegmatis (strain ATCC 700084 / mc(2)155) (Mycobacterium smegmatis).